A 201-amino-acid chain; its full sequence is Holliday junction branch migration complex subunit RuvA (201 aa).

Residues 1–64 (MFNSISGILS…EDQMRLFGFP (64 aa)) form a domain I region. The interval 65 to 140 (NQAERSLFLD…KLTNLNEVSS (76 aa)) is domain II. The tract at residues 140-144 (SKGQA) is flexible linker. The domain III stretch occupies residues 145–201 (SVSCEYEDIVTALTEMGFERKSVIVQVEKIAEEMKAAGSDPLKNEEELFRRSIVALS).

It belongs to the RuvA family. Homotetramer. Forms an RuvA(8)-RuvB(12)-Holliday junction (HJ) complex. HJ DNA is sandwiched between 2 RuvA tetramers; dsDNA enters through RuvA and exits via RuvB. An RuvB hexamer assembles on each DNA strand where it exits the tetramer. Each RuvB hexamer is contacted by two RuvA subunits (via domain III) on 2 adjacent RuvB subunits; this complex drives branch migration. In the full resolvosome a probable DNA-RuvA(4)-RuvB(12)-RuvC(2) complex forms which resolves the HJ.

Its subcellular location is the cytoplasm. In terms of biological role, the RuvA-RuvB-RuvC complex processes Holliday junction (HJ) DNA during genetic recombination and DNA repair, while the RuvA-RuvB complex plays an important role in the rescue of blocked DNA replication forks via replication fork reversal (RFR). RuvA specifically binds to HJ cruciform DNA, conferring on it an open structure. The RuvB hexamer acts as an ATP-dependent pump, pulling dsDNA into and through the RuvAB complex. HJ branch migration allows RuvC to scan DNA until it finds its consensus sequence, where it cleaves and resolves the cruciform DNA. This is Holliday junction branch migration complex subunit RuvA from Treponema denticola (strain ATCC 35405 / DSM 14222 / CIP 103919 / JCM 8153 / KCTC 15104).